The sequence spans 221 residues: Chalcone--flavanone isomerase (221 aa).

Substrate-binding residues include threonine 47, asparagine 112, and serine 189.

It belongs to the chalcone isomerase family.

It catalyses the reaction a chalcone = a flavanone.. Its pathway is secondary metabolite biosynthesis; flavonoid biosynthesis. Catalyzes the intramolecular cyclization of bicyclic chalcones into tricyclic (S)-flavanones. Responsible for the isomerization of 4,2',4',6'-tetrahydroxychalcone (also termed chalcone) into naringenin. The polypeptide is Chalcone--flavanone isomerase (CHI) (Dianthus caryophyllus (Carnation)).